A 242-amino-acid chain; its full sequence is Outer membrane protein class 4 (242 aa).

The signal sequence occupies residues 1–22 (MTKQLKLSALFVALLASGTAVA). Repeat copies occupy residues 69-70 (AP), 71-72 (EP), 73-74 (EP), 75-76 (EP), 77-78 (EP), 79-80 (AP), and 81-82 (AP). A 7 X 2 AA tandem repeats of X-P region spans residues 69 to 82 (APEPEPEPEPAPAP). In terms of domain architecture, OmpA-like spans 92-229 (YVDETISLSA…RVDVKIRSIV (138 aa)). A disulfide bond links Cys191 and Cys214.

Belongs to the outer membrane OOP (TC 1.B.6) superfamily.

Its subcellular location is the cell outer membrane. The chain is Outer membrane protein class 4 (rmpM) from Neisseria meningitidis serogroup A / serotype 4A (strain DSM 15465 / Z2491).